An 86-amino-acid chain; its full sequence is Large ribosomal subunit protein bL27 (86 aa).

Gly residues predominate over residues M1 to T10. The disordered stretch occupies residues M1–L21.

The protein belongs to the bacterial ribosomal protein bL27 family.

This Bordetella petrii (strain ATCC BAA-461 / DSM 12804 / CCUG 43448) protein is Large ribosomal subunit protein bL27.